A 60-amino-acid polypeptide reads, in one-letter code: Small ribosomal subunit protein bS21 (60 aa).

This sequence belongs to the bacterial ribosomal protein bS21 family.

This is Small ribosomal subunit protein bS21 (rpsU) from Mycoplasma pneumoniae (strain ATCC 29342 / M129 / Subtype 1) (Mycoplasmoides pneumoniae).